The chain runs to 169 residues: Peptide methionine sulfoxide reductase MsrA (169 aa).

C11 is a catalytic residue.

This sequence belongs to the MsrA Met sulfoxide reductase family.

It carries out the reaction L-methionyl-[protein] + [thioredoxin]-disulfide + H2O = L-methionyl-(S)-S-oxide-[protein] + [thioredoxin]-dithiol. The catalysed reaction is [thioredoxin]-disulfide + L-methionine + H2O = L-methionine (S)-S-oxide + [thioredoxin]-dithiol. Has an important function as a repair enzyme for proteins that have been inactivated by oxidation. Catalyzes the reversible oxidation-reduction of methionine sulfoxide in proteins to methionine. The chain is Peptide methionine sulfoxide reductase MsrA from Leifsonia xyli subsp. xyli (strain CTCB07).